A 125-amino-acid polypeptide reads, in one-letter code: UPF0593 mitochondrial protein C806.05 (125 aa).

Belongs to the UPF0593 family.

The protein localises to the mitochondrion. The chain is UPF0593 mitochondrial protein C806.05 from Schizosaccharomyces pombe (strain 972 / ATCC 24843) (Fission yeast).